A 968-amino-acid polypeptide reads, in one-letter code: Bifunctional glyoxylate cycle protein (968 aa).

Residues 1–443 are isocitrate lyase; it reads MSSAAKNFYQ…AVASQDEEIL (443 aa). The malate synthase stretch occupies residues 444–968; the sequence is SLTAQNVAGD…AYDRLVSEGY (525 aa). The active-site Proton acceptor is Arg-601. The active-site Proton donor is Asp-881.

It in the N-terminal section; belongs to the isocitrate lyase/PEP mutase superfamily. Isocitrate lyase family. This sequence in the C-terminal section; belongs to the malate synthase family. In terms of tissue distribution, intestinal and body wall muscle cells.

The enzyme catalyses D-threo-isocitrate = glyoxylate + succinate. It carries out the reaction glyoxylate + acetyl-CoA + H2O = (S)-malate + CoA + H(+). It functions in the pathway carbohydrate metabolism; glyoxylate cycle; (S)-malate from isocitrate: step 1/2. Its pathway is carbohydrate metabolism; glyoxylate cycle; (S)-malate from isocitrate: step 2/2. The chain is Bifunctional glyoxylate cycle protein (icl-1) from Caenorhabditis elegans.